We begin with the raw amino-acid sequence, 164 residues long: Putative 4-hydroxy-4-methyl-2-oxoglutarate aldolase (164 aa).

Residues 75 to 78 and Arg97 contribute to the substrate site; that span reads GDML. Asp98 serves as a coordination point for a divalent metal cation.

Belongs to the class II aldolase/RraA-like family. As to quaternary structure, homotrimer. A divalent metal cation is required as a cofactor.

It catalyses the reaction 4-hydroxy-4-methyl-2-oxoglutarate = 2 pyruvate. The catalysed reaction is oxaloacetate + H(+) = pyruvate + CO2. In terms of biological role, catalyzes the aldol cleavage of 4-hydroxy-4-methyl-2-oxoglutarate (HMG) into 2 molecules of pyruvate. Also contains a secondary oxaloacetate (OAA) decarboxylase activity due to the common pyruvate enolate transition state formed following C-C bond cleavage in the retro-aldol and decarboxylation reactions. The chain is Putative 4-hydroxy-4-methyl-2-oxoglutarate aldolase from Hahella chejuensis (strain KCTC 2396).